Here is a 329-residue protein sequence, read N- to C-terminus: MGATGDVEQPRGPGGAERGGPELGDAGAAGQLVLTNPWNIMIKHRQVQRRGRRSQMTTSFTDPAISMDLLRAVLQPSINEEIQTVFNKYMKFFQKAALNVRDNVGEEVDAEQLIQEACRSCLEQAKLLFSDGEKVIPRLTHELPGIKRGRQAEEECALRGSPIPKKRKGRPPGHILANDRAATGMVWKPKSCEPIRREGPKWDPARLNESTTFVLGSRANKALGMGGTRGRIYIKHPHLFKYAADPQDKHWLAEQHHMRATGGKMAYLLIEEDIRDLAASDDYRGCLDLKLEELKSFVLPSWMVEKMRKYMETLRTENEHRAVEAPPQT.

The tract at residues 1–27 (MGATGDVEQPRGPGGAERGGPELGDAG) is disordered. A compositionally biased stretch (gly residues) spans 12–22 (GPGGAERGGPE). The segment at 56–147 (MTTSFTDPAI…RLTHELPGIK (92 aa)) is important for dimerization. The segment at residues 159-173 (RGSPIPKKRKGRPPG) is a DNA-binding region (a.T hook). The residue at position 161 (S161) is a Phosphoserine. Residues 164–170 (PKKRKGR) carry the Nuclear localization signal motif. The interval 197–316 (REGPKWDPAR…MRKYMETLRT (120 aa)) is important for DNA and nucleosome binding. Residues 216 to 237 (GSRANKALGMGGTRGRIYIKHP) constitute a DNA-binding region (H-T-H motif).

In terms of assembly, monomer and homodimer. A minor proportion may form homotrimers. Interacts with ZNF541. Interacts with the terminal deoxynucleotidyltransferase DNTT. Interacts with TRERF1. Identified in a histone deacetylase complex that contains DNTTIP1, HDAC1 and MIDEAS; this complex assembles into a tetramer that contains four copies of each protein chain. Component of a histone deacetylase complex containing DNTTIP1, ZNF541, HDAC1 and HDAC2. Identified in a complex with KCTD19, HDAC1, HDAC2 and ZNF541.

The protein localises to the nucleus. Its function is as follows. Increases DNTT terminal deoxynucleotidyltransferase activity (in vitro). Also acts as a transcriptional regulator, binding to the consensus sequence 5'-GNTGCATG-3' following an AT-tract. Associates with RAB20 promoter and positively regulates its transcription. Binds DNA and nucleosomes; may recruit HDAC1 complexes to nucleosomes or naked DNA. This Bos taurus (Bovine) protein is Deoxynucleotidyltransferase terminal-interacting protein 1 (DNTTIP1).